The sequence spans 512 residues: Alanine--glyoxylate aminotransferase 2, mitochondrial (512 aa).

The transit peptide at 1–39 (MSLAWRTLQKAFYLETSLRILQMRPSLSCASRIYVPKLT) directs the protein to the mitochondrion. At K55 the chain carries N6-acetyllysine. K69 carries the post-translational modification N6-acetyllysine; alternate. N6-succinyllysine; alternate is present on K69. K82 bears the N6-acetyllysine mark. Residue K260 is modified to N6-acetyllysine; alternate. K260 bears the N6-succinyllysine; alternate mark. Position 302 is an N6-succinyllysine (K302). K348 carries the post-translational modification N6-(pyridoxal phosphate)lysine. Residues K415 and K418 each carry the N6-acetyllysine; alternate modification. K415 and K418 each carry N6-succinyllysine; alternate. K452 carries the post-translational modification N6-acetyllysine.

Belongs to the class-III pyridoxal-phosphate-dependent aminotransferase family. In terms of assembly, homotetramer. Requires pyridoxal 5'-phosphate as cofactor. Expressed in the liver, lung and kidney.

Its subcellular location is the mitochondrion. It carries out the reaction glyoxylate + L-alanine = glycine + pyruvate. The enzyme catalyses (R)-3-amino-2-methylpropanoate + pyruvate = 2-methyl-3-oxopropanoate + L-alanine. It catalyses the reaction 3-oxopropanoate + L-alanine = beta-alanine + pyruvate. The catalysed reaction is 2-oxobutanoate + L-alanine = (2S)-2-aminobutanoate + pyruvate. It carries out the reaction N(omega),N(omega)-dimethyl-L-arginine + pyruvate = 5-(3,3-dimethylguanidino)-2-oxopentanoate + L-alanine. The enzyme catalyses N(omega),N('omega)-dimethyl-L-arginine + pyruvate = 5-(3,3'-dimethylguanidino)-2-oxopentanoate + L-alanine. It catalyses the reaction N(omega),N(omega)-dimethyl-L-arginine + glyoxylate = 5-(3,3-dimethylguanidino)-2-oxopentanoate + glycine. The catalysed reaction is N(omega),N('omega)-dimethyl-L-arginine + glyoxylate = 5-(3,3'-dimethylguanidino)-2-oxopentanoate + glycine. It carries out the reaction N(omega)-methyl-L-arginine + pyruvate = 5-(3-methylguanidino)-2-oxopentanoate + L-alanine. The enzyme catalyses N(omega)-methyl-L-arginine + glyoxylate = 5-(3-methylguanidino)-2-oxopentanoate + glycine. It catalyses the reaction L-ornithine + pyruvate = 5-amino-2-oxopentanoate + L-alanine. The catalysed reaction is L-ornithine + glyoxylate = 5-amino-2-oxopentanoate + glycine. It carries out the reaction (2S)-2-aminobutanoate + glyoxylate = 2-oxobutanoate + glycine. The enzyme catalyses N(omega),N(omega)-dimethyl-L-arginine + oxaloacetate = 5-(3,3-dimethylguanidino)-2-oxopentanoate + L-aspartate. It catalyses the reaction oxaloacetate + L-alanine = L-aspartate + pyruvate. The catalysed reaction is N(omega),N(omega)-dimethyl-L-arginine + 2-oxobutanoate = 5-(3,3-dimethylguanidino)-2-oxopentanoate + (2S)-2-aminobutanoate. It carries out the reaction 2-oxopentanoate + N(omega),N(omega)-dimethyl-L-arginine = 5-(3,3-dimethylguanidino)-2-oxopentanoate + L-2-aminopentanoate. The enzyme catalyses 2-oxohexanoate + N(omega),N(omega)-dimethyl-L-arginine = L-2-aminohexanoate + 5-(3,3-dimethylguanidino)-2-oxopentanoate. With respect to regulation, inhibited by 5-fluorouracil and 6-fluorouracil. Inhibited by phenylhydrazine, hydroxylamine, l-amino-L-proline, para-chloromercuribenzoate and HgCl2. In terms of biological role, multifunctional aminotransferase with a broad substrate specificity. Catalyzes the conversion of glyoxylate to glycine using alanine as the amino donor. Catalyzes metabolism of not L- but the D-isomer of D-beta-aminoisobutyric acid to generate 2-methyl-3-oxopropanoate and alanine. Catalyzes the transfer of the amino group from beta-alanine to pyruvate to yield L-alanine and 3-oxopropanoate. Can metabolize NG-monomethyl-L-arginine (NMMA), asymmetric NG,NG-dimethyl-L-arginine (ADMA) and symmetric NG,N'G-dimethyl-L-arginine (SDMA). ADMA is a potent inhibitor of nitric-oxide (NO) synthase, and this activity provides mechanism through which the kidney regulates blood pressure. The polypeptide is Alanine--glyoxylate aminotransferase 2, mitochondrial (Agxt2) (Rattus norvegicus (Rat)).